Here is a 399-residue protein sequence, read N- to C-terminus: Phosphatidate cytidylyltransferase 5, chloroplastic (399 aa).

Residues 1 to 26 constitute a chloroplast transit peptide; it reads MAPFVEVCRYKPLPLSLSSLCTCPCR. The next 6 membrane-spanning stretches (helical) occupy residues 123–143, 187–207, 217–237, 266–286, 309–329, and 333–353; these read VGGI…AAVL, FGHI…ALLL, LSST…WVKL, VGLV…TFAF, AFAG…SLSW, and LVST…GDLT.

It belongs to the CDS family. Requires Mg(2+) as cofactor.

The protein localises to the plastid. The protein resides in the chloroplast membrane. It catalyses the reaction a 1,2-diacyl-sn-glycero-3-phosphate + CTP + H(+) = a CDP-1,2-diacyl-sn-glycerol + diphosphate. It functions in the pathway phospholipid metabolism; CDP-diacylglycerol biosynthesis; CDP-diacylglycerol from sn-glycerol 3-phosphate: step 3/3. With respect to regulation, highest activities is obtained at about 30 mM CTP and 2 mM phosphatidic acid (PA). In terms of biological role, may be involved in the synthesis of minor phospholipids and in modulation of IP3-mediated signal transduction. Promotes the biosynthesis of plastidial phosphatidylglycerol (PG) which is required for structure and function of thylakoid membranes and, hence, for photoautotrophic growth. This chain is Phosphatidate cytidylyltransferase 5, chloroplastic, found in Arabidopsis thaliana (Mouse-ear cress).